We begin with the raw amino-acid sequence, 151 residues long: Acidic phospholipase A2 2 (151 aa).

An N-terminal signal peptide occupies residues 1–27; sequence MYPAHLLVLLAVCVSLLGAASIPARPL. 7 cysteine pairs are disulfide-bonded: cysteine 38-cysteine 104, cysteine 54-cysteine 151, cysteine 56-cysteine 72, cysteine 71-cysteine 132, cysteine 78-cysteine 125, cysteine 88-cysteine 118, and cysteine 111-cysteine 123. Ca(2+)-binding residues include tyrosine 55, glycine 57, and glycine 59. The active site involves histidine 75. Residue aspartate 76 participates in Ca(2+) binding. Aspartate 126 is a catalytic residue.

Belongs to the phospholipase A2 family. Group I subfamily. D49 sub-subfamily. Ca(2+) serves as cofactor. Expressed by the venom gland.

The protein resides in the secreted. It carries out the reaction a 1,2-diacyl-sn-glycero-3-phosphocholine + H2O = a 1-acyl-sn-glycero-3-phosphocholine + a fatty acid + H(+). Functionally, PLA2 catalyzes the calcium-dependent hydrolysis of the 2-acyl groups in 3-sn-phosphoglycerides. This Tropidechis carinatus (Australian rough-scaled snake) protein is Acidic phospholipase A2 2.